We begin with the raw amino-acid sequence, 339 residues long: Ribonucleoside-diphosphate reductase subunit beta (339 aa).

2 residues coordinate Fe cation: D87 and H121. Y125 is an active-site residue. Residue H215 coordinates Fe cation.

This sequence belongs to the ribonucleoside diphosphate reductase small chain family. In terms of assembly, tetramer of two alpha and two beta subunits. It depends on Fe cation as a cofactor.

It carries out the reaction a 2'-deoxyribonucleoside 5'-diphosphate + [thioredoxin]-disulfide + H2O = a ribonucleoside 5'-diphosphate + [thioredoxin]-dithiol. Provides the precursors necessary for DNA synthesis. Catalyzes the biosynthesis of deoxyribonucleotides from the corresponding ribonucleotides. The chain is Ribonucleoside-diphosphate reductase subunit beta (nrdF) from Mycoplasma pneumoniae (strain ATCC 29342 / M129 / Subtype 1) (Mycoplasmoides pneumoniae).